The primary structure comprises 884 residues: Receptor-like protein 39 (884 aa).

The first 24 residues, 1-24 (MSELLFRLNFLLLLLLSCVSLASS), serve as a signal peptide directing secretion. Residues 25–847 (FFSFNDPVVG…EEEEQVLNWK (823 aa)) are Extracellular-facing. N-linked (GlcNAc...) asparagine glycosylation is found at Asn59, Asn71, and Asn92. 10 LRR repeats span residues 98–122 (FHQLRHLYLSYNNFTPSSIPSEFGM), 124–146 (NKLEVLFMSTGGFLGQVPSSFSN), 147–170 (LSMLSALLLHHNELTGSLSFVRNL), 171–196 (RKLTILDVSHNHFSGTLNPNSSLFEL), 197–223 (HNLAYLDLGSNNFTSSSLPYEFGNLNK), 225–245 (ELLDVSSNSFFGQVPPTISNL), 246–268 (TQLTELYLPLNDFTGSLPLVQNL), 269–292 (TKLSILHLSDNHFSGTIPSSLFTM), 294–318 (FLSYLDLGGNNLSGSIEVPNSSLSS), and 320–344 (LENLNLGENHFEGKIIEPISKLINL). An N-linked (GlcNAc...) asparagine glycan is attached at Asn146. N-linked (GlcNAc...) asparagine glycans are attached at residues Asn190, Asn208, Asn244, and Asn267. Residues Asn304 and Asn313 are each glycosylated (N-linked (GlcNAc...) asparagine). One copy of the LRR 11; degenerate repeat lies at 345–365 (KELHLSFLNTSYPINLKLFSS). Asn353 carries N-linked (GlcNAc...) asparagine glycosylation. LRR repeat units lie at residues 366-391 (LKYLLLLDLSGGWISQASLSLDSYIP), 392-413 (STLEALLLKHCNISVFPNILKT), 414-438 (LPNLEFIALSTNKISGKIPEWLWSL), 440-463 (RLSSVFIEENLFTGFEGSSEILVN), and 464-487 (SSVRILNLLSNNLEGALPHLPLSV). Asn403 carries an N-linked (GlcNAc...) asparagine glycan. An N-linked (GlcNAc...) asparagine glycan is attached at Asn463. An LRR 17; degenerate repeat occupies 488-507 (NYFSARNNRYGGDIPLSICS). LRR repeat units follow at residues 508-529 (RRSLVFLDLSYNNFTGPIPPCP), 530-553 (SNFLILNLRKNNLEGSIPDTYYAD), 554-577 (APLRSLDVGYNRLTGKLPRSLLNC), 579-601 (ALQFLSVDHNGIKDTFPFSLKAL), 602-625 (PKLQVLILHSNNFYGPLSPPNQGS), 628-652 (FPELRILEIAGNKFTGSLPPDFFEN), 702-725 (SSSATIDFSGNRLEGEIPESIGLL), 726-749 (KALIALNLSNNAFTGHIPLSLANL), 750-773 (KKIESLDLSSNQLSGTIPNGIGTL), and 775-798 (FLAYMNVSHNQLNGEIPQGTQITG). The N-linked (GlcNAc...) asparagine glycan is linked to Asn520. N-linked (GlcNAc...) asparagine glycosylation occurs at Asn576. An N-linked (GlcNAc...) asparagine glycan is attached at Asn732. Asn780 carries an N-linked (GlcNAc...) asparagine glycan. A helical membrane pass occupies residues 848-868 (GVGIGYGVGVLLGLAIAQLIA). Residues 869-884 (SYKPEWLVFLFQSRNH) lie on the Cytoplasmic side of the membrane.

The protein belongs to the RLP family.

It localises to the cell membrane. This chain is Receptor-like protein 39, found in Arabidopsis thaliana (Mouse-ear cress).